The following is a 321-amino-acid chain: D-alanine--D-alanine ligase (321 aa).

One can recognise an ATP-grasp domain in the interval 121–315; sequence RSWFLTNNIN…FTNLIEEIIK (195 aa). Position 147–199 (147–199) interacts with ATP; that stretch reads PVKRPYVIKPLTQGSSIGVEVIFEEDDFNFADYNFPYGYQVIIEQYIKGRELQ. Positions 268, 282, and 284 each coordinate Mg(2+).

The protein belongs to the D-alanine--D-alanine ligase family. The cofactor is Mg(2+). Mn(2+) is required as a cofactor.

It localises to the cytoplasm. The enzyme catalyses 2 D-alanine + ATP = D-alanyl-D-alanine + ADP + phosphate + H(+). The protein operates within cell wall biogenesis; peptidoglycan biosynthesis. Its function is as follows. Cell wall formation. In Rickettsia felis (strain ATCC VR-1525 / URRWXCal2) (Rickettsia azadi), this protein is D-alanine--D-alanine ligase.